A 121-amino-acid chain; its full sequence is Cell division protein FtsB (121 aa).

Residues 1-6 (MRNWRW) are Cytoplasmic-facing. Residues 7–24 (LLLVLAVLLAWLQYRFWF) form a helical membrane-spanning segment. Over 25–121 (GPGNSGEVMM…AASADPVDHP (97 aa)) the chain is Periplasmic. Residues 31-66 (EVMMLEAQVAHQTRDNEGLRQRNQALAAEVKDLKDG) are a coiled coil. Positions 98–121 (PPAAQEAAPPAQPPAASADPVDHP) are disordered.

This sequence belongs to the FtsB family. In terms of assembly, part of a complex composed of FtsB, FtsL and FtsQ.

Its subcellular location is the cell inner membrane. Its function is as follows. Essential cell division protein. May link together the upstream cell division proteins, which are predominantly cytoplasmic, with the downstream cell division proteins, which are predominantly periplasmic. This chain is Cell division protein FtsB, found in Xanthomonas campestris pv. campestris (strain 8004).